Reading from the N-terminus, the 170-residue chain is Phosphopantetheine adenylyltransferase (170 aa).

T10 contacts substrate. ATP-binding positions include 10–11 and H18; that span reads TF. Substrate is bound by residues K42, V79, and R93. ATP contacts are provided by residues 94–96, E104, and 129–135; these read GLR and TQFISST.

It belongs to the bacterial CoaD family. As to quaternary structure, homohexamer. Mg(2+) is required as a cofactor.

The protein resides in the cytoplasm. The catalysed reaction is (R)-4'-phosphopantetheine + ATP + H(+) = 3'-dephospho-CoA + diphosphate. The protein operates within cofactor biosynthesis; coenzyme A biosynthesis; CoA from (R)-pantothenate: step 4/5. Its function is as follows. Reversibly transfers an adenylyl group from ATP to 4'-phosphopantetheine, yielding dephospho-CoA (dPCoA) and pyrophosphate. The sequence is that of Phosphopantetheine adenylyltransferase from Parvibaculum lavamentivorans (strain DS-1 / DSM 13023 / NCIMB 13966).